Reading from the N-terminus, the 205-residue chain is Large ribosomal subunit protein uL3c (205 aa).

Residues 130 to 150 form a disordered region; it reads RGPMSHGSKNHRQPGSIGAGT.

Belongs to the universal ribosomal protein uL3 family. Part of the 50S ribosomal subunit.

Its subcellular location is the plastid. The protein localises to the chloroplast. One of the primary rRNA binding proteins, it binds directly near the 3'-end of the 23S rRNA, where it nucleates assembly of the 50S subunit. The chain is Large ribosomal subunit protein uL3c (rpl3) from Gracilaria tenuistipitata var. liui (Red alga).